A 230-amino-acid chain; its full sequence is UPF0758 protein plu4865 (230 aa).

Residues 108-230 (IMSSPSVTQE…CVSFAERGWI (123 aa)) enclose the MPN domain. Zn(2+) contacts are provided by His-179, His-181, and Asp-192. The JAMM motif signature appears at 179 to 192 (HNHPSGHAEPSLAD).

It belongs to the UPF0758 family. YicR subfamily.

This Photorhabdus laumondii subsp. laumondii (strain DSM 15139 / CIP 105565 / TT01) (Photorhabdus luminescens subsp. laumondii) protein is UPF0758 protein plu4865.